Consider the following 208-residue polypeptide: Thymidylate kinase (208 aa).

11–18 (GTEGVGKT) provides a ligand contact to ATP.

It belongs to the thymidylate kinase family.

The catalysed reaction is dTMP + ATP = dTDP + ADP. Phosphorylation of dTMP to form dTDP in both de novo and salvage pathways of dTTP synthesis. This chain is Thymidylate kinase, found in Psychrobacter sp. (strain PRwf-1).